A 75-amino-acid chain; its full sequence is uncharacterized protein (75 aa).

A dksA C4-type zinc finger spans residues 43-67; that stretch reads CSECGLPIPTTRLRANPFAHRCVSC.

This is an uncharacterized protein from Haemophilus influenzae (strain ATCC 51907 / DSM 11121 / KW20 / Rd).